We begin with the raw amino-acid sequence, 70 residues long: Large ribosomal subunit protein eL38 (70 aa).

Lys-4 is covalently cross-linked (Glycyl lysine isopeptide (Lys-Gly) (interchain with G-Cter in SUMO2)). Position 9 is an N6-acetyllysine; alternate (Lys-9). A Glycyl lysine isopeptide (Lys-Gly) (interchain with G-Cter in SUMO2); alternate cross-link involves residue Lys-9. Lys-67 bears the N6-acetyllysine mark.

It belongs to the eukaryotic ribosomal protein eL38 family. As to quaternary structure, component of the large ribosomal subunit.

The protein localises to the cytoplasm. In terms of biological role, component of the large ribosomal subunit. The ribosome is a large ribonucleoprotein complex responsible for the synthesis of proteins in the cell. This is Large ribosomal subunit protein eL38 (RPL38) from Macaca fascicularis (Crab-eating macaque).